Reading from the N-terminus, the 304-residue chain is Non-specific ribonucleoside hydrolase RihC (304 aa).

His-233 is a catalytic residue.

It belongs to the IUNH family. RihC subfamily.

Hydrolyzes both purine and pyrimidine ribonucleosides with a broad-substrate specificity. The chain is Non-specific ribonucleoside hydrolase RihC from Klebsiella pneumoniae subsp. pneumoniae (strain ATCC 700721 / MGH 78578).